The following is a 397-amino-acid chain: Cysteine protease ATG4A (397 aa).

Cys79 serves as the catalytic Nucleophile. Catalysis depends on residues Asp279 and His281. An LIR motif is present at residues 392 to 395 (FEIL).

The protein belongs to the peptidase C54 family.

The protein resides in the cytoplasm. It catalyses the reaction [protein]-C-terminal L-amino acid-glycyl-phosphatidylethanolamide + H2O = [protein]-C-terminal L-amino acid-glycine + a 1,2-diacyl-sn-glycero-3-phosphoethanolamine. Functionally, cysteine protease that plays a key role in autophagy by mediating both proteolytic activation and delipidation of ATG8 family proteins. The protease activity is required for proteolytic activation of ATG8 family proteins: cleaves the C-terminal amino acid of ATG8 proteins to reveal a C-terminal glycine. Exposure of the glycine at the C-terminus is essential for ATG8 proteins conjugation to phosphatidylethanolamine (PE) and insertion to membranes, which is necessary for autophagy. Protease activity is also required to counteract formation of high-molecular weight conjugates of ATG8 proteins (ATG8ylation): acts as a deubiquitinating-like enzyme that removes ATG8 conjugated to other proteins, such as ATG3. In addition to the protease activity, also mediates delipidation of ATG8 family proteins. Catalyzes delipidation of PE-conjugated forms of ATG8 proteins during macroautophagy. The polypeptide is Cysteine protease ATG4A (Xenopus laevis (African clawed frog)).